A 129-amino-acid chain; its full sequence is Glycine cleavage system H protein (129 aa).

The region spanning 24 to 106 is the Lipoyl-binding domain; it reads SYTVGITEHA…YGEGWFFRVM (83 aa). Lysine 65 carries the post-translational modification N6-lipoyllysine.

Belongs to the GcvH family. The glycine cleavage system is composed of four proteins: P, T, L and H. (R)-lipoate serves as cofactor.

In terms of biological role, the glycine cleavage system catalyzes the degradation of glycine. The H protein shuttles the methylamine group of glycine from the P protein to the T protein. This Shewanella putrefaciens (strain CN-32 / ATCC BAA-453) protein is Glycine cleavage system H protein.